A 149-amino-acid chain; its full sequence is Large ribosomal subunit protein bL9 (149 aa).

The protein belongs to the bacterial ribosomal protein bL9 family.

Binds to the 23S rRNA. This chain is Large ribosomal subunit protein bL9, found in Histophilus somni (strain 129Pt) (Haemophilus somnus).